The sequence spans 674 residues: Translation initiation factor IF-2 (674 aa).

Residues 174–344 (IRPPVVTVMG…LLVAELREIK (171 aa)) form the tr-type G domain. Residues 183-190 (GHVDHGKT) form a G1 region. Residue 183–190 (GHVDHGKT) coordinates GTP. The interval 208 to 212 (GITQS) is G2. Positions 229-232 (DTPG) are G3. Residues 229–233 (DTPGH) and 283–286 (NKID) each bind GTP. The G4 stretch occupies residues 283–286 (NKID). A G5 region spans residues 320–322 (SAR).

This sequence belongs to the TRAFAC class translation factor GTPase superfamily. Classic translation factor GTPase family. IF-2 subfamily.

The protein resides in the cytoplasm. Its function is as follows. One of the essential components for the initiation of protein synthesis. Protects formylmethionyl-tRNA from spontaneous hydrolysis and promotes its binding to the 30S ribosomal subunits. Also involved in the hydrolysis of GTP during the formation of the 70S ribosomal complex. This Pseudothermotoga lettingae (strain ATCC BAA-301 / DSM 14385 / NBRC 107922 / TMO) (Thermotoga lettingae) protein is Translation initiation factor IF-2.